We begin with the raw amino-acid sequence, 604 residues long: Netrin-1 (604 aa).

The N-terminal stretch at 1–24 (MMRAVWEALAALAAVACLVGAVRG) is a signal peptide. Residues 47–284 (HPRRCIPDFV…AVSDLQVGGR (238 aa)) enclose the Laminin N-terminal domain. 3 N-linked (GlcNAc...) asparagine glycosylation sites follow: Asn95, Asn116, and Asn131. 15 cysteine pairs are disulfide-bonded: Cys119–Cys152, Cys285–Cys294, Cys287–Cys304, Cys306–Cys315, Cys318–Cys338, Cys341–Cys350, Cys343–Cys368, Cys371–Cys380, Cys383–Cys401, Cys404–Cys416, Cys406–Cys423, Cys425–Cys434, Cys437–Cys451, Cys472–Xaa544, and Cys491–Cys601. Laminin EGF-like domains lie at 285 to 340 (CKCN…ECVA), 341 to 403 (CNCN…ACKA), and 404 to 453 (CDCH…PCIK). N-linked (GlcNAc...) asparagine glycosylation is present at Asn417. Residues 472–601 (CDSYCKASKG…FQQREKKGKC (130 aa)) form the NTR domain. A Cell attachment site motif is present at residues 530 to 532 (RGD).

In terms of assembly, binds to its receptors; DCC, UNC5A, UNC5B, UNC5C and probably UNC5D. Binds to its receptor; DSCAM. Interacts with APP.

It localises to the secreted. The protein localises to the cytoplasm. In terms of biological role, netrins control guidance of CNS commissural axons and peripheral motor axons. Its association with either DCC or some UNC5 receptors will lead to axon attraction or repulsion, respectively. Binding to UNC5C might cause dissociation of UNC5C from polymerized TUBB3 in microtubules and thereby lead to increased microtubule dynamics and axon repulsion. Involved in dorsal root ganglion axon projection towards the spinal cord. It also serves as a survival factor via its association with its receptors which prevent the initiation of apoptosis. Involved in colorectal tumorigenesis by regulating apoptosis. The polypeptide is Netrin-1 (Ntn1) (Rattus norvegicus (Rat)).